Consider the following 187-residue polypeptide: Ribosome-recycling factor (187 aa).

This sequence belongs to the RRF family.

The protein localises to the cytoplasm. Its function is as follows. Responsible for the release of ribosomes from messenger RNA at the termination of protein biosynthesis. May increase the efficiency of translation by recycling ribosomes from one round of translation to another. This is Ribosome-recycling factor from Bradyrhizobium sp. (strain BTAi1 / ATCC BAA-1182).